The sequence spans 626 residues: Nuclear receptor subfamily 4 group A member 3 (626 aa).

The tract at residues 1–108 is activation function (AF)-1 domain; it reads MPCVQAQYSP…HHHHHHHHHH (108 aa). Positions 1 to 138 are required for DNA-PK heterotrimer; that stretch reads MPCVQAQYSP…PSTSMYFKQS (138 aa). Positions 1–291 are interaction with NCOA1, NCOA2, NCOA3 and KAT2B; it reads MPCVQAQYSP…SRSSSSGEGT (291 aa). 3 disordered regions span residues 92-152, 192-211, and 265-284; these read PSYH…PPQA, HFKP…GHHL, and PTAS…PSRS. Residues 93–110 are compositionally biased toward basic residues; sequence SYHHHHHHHHHHHHHHQQ. 2 stretches are compositionally biased toward pro residues: residues 140-149 and 195-204; these read PSTPTTPAFP and PSPPHPPAPS. Low complexity predominate over residues 268 to 284; sequence SSLLGESPSLPSPPSRS. Positions 289–364 form a DNA-binding region, nuclear receptor; sequence EGTCAVCGDN…VGMVKEVVRT (76 aa). 2 NR C4-type zinc fingers span residues 292–312 and 328–352; these read CAVC…CEGC and CLAN…FQKC. Residues 364-394 are disordered; that stretch reads TDSLKGRRGRLPSKPKSPLQQEPSQPSPPSP. Over residues 377–387 the composition is skewed to low complexity; the sequence is KPKSPLQQEPS. Residues 379-626 form an interaction with KAT2B region; the sequence is KSPLQQEPSQ…DKLFLDTLPF (248 aa). An NR LBD domain is found at 394-623; it reads PPICMMNALV…SIIDKLFLDT (230 aa).

This sequence belongs to the nuclear hormone receptor family. NR4 subfamily. As to quaternary structure, interacts with SIX3 (via homeobox); differentially regulates the transcriptional activities of NR4A3. Interacts with the constituents of DNA-PK heterotrimer PRKDC, XRCC6 and XRCC5; phosphorylates and prevents NR4A3 ubiquitinylation and degradation. Interacts with NCOA2; potentiates the activity of the NR4A3. Interacts with NCOA1, NCOA3, MED1 and KAT2B. Interacts with EP300 and NCOA2; mediates the recruitment of MED1 in the coactivator complex. Interacts with NR3C1 (via nuclear receptor DNA-binding domain); the interactions represses transcription activity of NR4A3 on the POMC promoter Nur response element (NurRE). Interacts with TRIM28; the interactions potentiates NR4A3 activity on NurRE promoter. Binds DNA as a monomer and homodimer. Interacts with PARP1; activates PARP1 by improving acetylation of PARP1 and suppressing the interaction between PARP1 and SIRT1. In terms of processing, phosphorylated by PRKDC. As to expression, isoform alpha is highly expressed in skeletal muscle. Isoform beta is highly expressed in skeletal muscle and low expressed in fetal brain and placenta.

The protein resides in the nucleus. Transcriptional activator that binds to regulatory elements in promoter regions in a cell- and response element (target)-specific manner. Induces gene expression by binding as monomers to the NR4A1 response element (NBRE) 5'-AAAAGGTCA-3' site and as homodimers to the Nur response element (NurRE) site in the promoter of their regulated target genes. Plays a role in the regulation of proliferation, survival and differentiation of many different cell types and also in metabolism and inflammation. Mediates proliferation of vascular smooth muscle, myeloid progenitor cell and type B pancreatic cells; promotes mitogen-induced vascular smooth muscle cell proliferation through transactivation of SKP2 promoter by binding a NBRE site. Upon PDGF stimulation, stimulates vascular smooth muscle cell proliferation by regulating CCND1 and CCND2 expression. In islets, induces type B pancreatic cell proliferation through up-regulation of genes that activate cell cycle, as well as genes that cause degradation of the CDKN1A. Negatively regulates myeloid progenitor cell proliferation by repressing RUNX1 in a NBRE site-independent manner. During inner ear, plays a role as a key mediator of the proliferative growth phase of semicircular canal development. Also mediates survival of neuron and smooth muscle cells; mediates CREB-induced neuronal survival, and during hippocampus development, plays a critical role in pyramidal cell survival and axonal guidance. Is required for S phase entry of the cell cycle and survival of smooth muscle cells by inducing CCND1, resulting in RB1 phosphorylation. Binds to NBRE motif in CCND1 promoter, resulting in the activation of the promoter and CCND1 transcription. Also plays a role in inflammation; upon TNF stimulation, mediates monocyte adhesion by inducing the expression of VCAM1 and ICAM1 by binding to the NBRE consensus site. In mast cells activated by Fc-epsilon receptor cross-linking, promotes the synthesis and release of cytokines but impairs events leading to degranulation. Also plays a role in metabolism; by modulating feeding behavior; and by playing a role in energy balance by inhibiting the glucocorticoid-induced orexigenic neuropeptides AGRP expression, at least in part by forming a complex with activated NR3C1 on the AGRP- glucocorticoid response element (GRE), and thus weakening the DNA binding activity of NR3C1. Upon catecholamines stimulation, regulates gene expression that controls oxidative metabolism in skeletal muscle. Plays a role in glucose transport by regulating translocation of the SLC2A4 glucose transporter to the cell surface. Finally, during gastrulation plays a crucial role in the formation of anterior mesoderm by controlling cell migration. Inhibits adipogenesis. Also participates in cardiac hypertrophy by activating PARP1. This Homo sapiens (Human) protein is Nuclear receptor subfamily 4 group A member 3 (NR4A3).